The sequence spans 61 residues: Large ribosomal subunit protein bL32 (61 aa).

Basic residues predominate over residues 1–16 (MAVPKRKTSPSKRGMR). The interval 1 to 41 (MAVPKRKTSPSKRGMRRSADALKASTYVEDKNSGELRRPHH) is disordered. Positions 28-41 (VEDKNSGELRRPHH) are enriched in basic and acidic residues.

It belongs to the bacterial ribosomal protein bL32 family.

The polypeptide is Large ribosomal subunit protein bL32 (Rhizobium rhizogenes (strain K84 / ATCC BAA-868) (Agrobacterium radiobacter)).